The primary structure comprises 292 residues: Glycine--tRNA ligase alpha subunit (292 aa).

It belongs to the class-II aminoacyl-tRNA synthetase family. As to quaternary structure, tetramer of two alpha and two beta subunits.

The protein resides in the cytoplasm. It catalyses the reaction tRNA(Gly) + glycine + ATP = glycyl-tRNA(Gly) + AMP + diphosphate. The polypeptide is Glycine--tRNA ligase alpha subunit (Syntrophus aciditrophicus (strain SB)).